The primary structure comprises 102 residues: MQKIRKGDKVVMLAGKDKGRTGEVVQVMPKEDRAVVRGVNVVKRHQRQTQTQEAGIINKEAPVHLSNVAIIDKDGKPTRVGFKVVDGKKVRVAKRSGEVIDG.

Belongs to the universal ribosomal protein uL24 family. In terms of assembly, part of the 50S ribosomal subunit.

Functionally, one of two assembly initiator proteins, it binds directly to the 5'-end of the 23S rRNA, where it nucleates assembly of the 50S subunit. In terms of biological role, one of the proteins that surrounds the polypeptide exit tunnel on the outside of the subunit. This Rhizobium johnstonii (strain DSM 114642 / LMG 32736 / 3841) (Rhizobium leguminosarum bv. viciae) protein is Large ribosomal subunit protein uL24.